The primary structure comprises 747 residues: Elastin (747 aa).

An N-terminal signal peptide occupies residues 1–26 (MRSLTAAARRPEVLLLLLCILQPSQP). Pro-34, Pro-65, and Pro-87 each carry 4-hydroxyproline. Allysine occurs at positions 105 and 109. Residues Pro-165, Pro-178, and Pro-181 each carry the 4-hydroxyproline modification. A Hydroxyproline modification is found at Pro-188. 4-hydroxyproline is present on Pro-201. Allysine is present on residues Lys-252, Lys-271, and Lys-275. A 4-hydroxyproline mark is found at Pro-298 and Pro-302. Residues Lys-324 and Lys-327 each carry the allysine modification. 4-hydroxyproline occurs at positions 335, 365, 370, 375, 380, and 385. 5 positions are modified to allysine: Lys-400, Lys-404, Lys-407, Lys-445, and Lys-448. A 4-hydroxyproline mark is found at Pro-462 and Pro-478. 2 positions are modified to allysine: Lys-489 and Lys-493. The residue at position 513 (Pro-513) is a 4-hydroxyproline. Lys-544, Lys-548, and Lys-552 each carry allysine. 5 positions are modified to 4-hydroxyproline: Pro-566, Pro-575, Pro-584, Pro-593, and Pro-599. Allysine is present on residues Lys-606 and Lys-609. Pro-630 carries the 4-hydroxyproline modification. 4 positions are modified to allysine: Lys-645, Lys-649, Lys-685, and Lys-688. Pro-719 and Pro-733 each carry 4-hydroxyproline. Cys-737 and Cys-742 form a disulfide bridge.

This sequence belongs to the elastin family. In terms of assembly, the polymeric elastin chains are cross-linked together into an extensible 3D network. Forms a ternary complex with BGN and MFAP2. Interacts with MFAP2 via divalent cations (calcium &gt; magnesium &gt; manganese) in a dose-dependent and saturating manner. Interacts with FBLN5 and FBN1. Forms a ternary complex with FBN1 and FBLN2 or FBLN5. Interacts with MFAP4 in a Ca (2+)-dependent manner; this interaction promotes ELN self-assembly. Interacts with EFEMP2 with moderate affinity. In terms of processing, elastin is formed through the cross-linking of its soluble precursor tropoelastin. Cross-linking is initiated through the action of lysyl oxidase on exposed lysines to form allysine. Subsequent spontaneous condensation reactions with other allysine or unmodified lysine residues result in various bi-, tri-, and tetrafunctional cross-links. The most abundant cross-links in mature elastin fibers are lysinonorleucine, allysine aldol, desmosine, and isodesmosine. Hydroxylation on proline residues within the sequence motif, GXPG, is most likely to be 4-hydroxy as this fits the requirement for 4-hydroxylation in vertebrates.

It is found in the secreted. It localises to the extracellular space. The protein resides in the extracellular matrix. In terms of biological role, major structural protein of tissues such as aorta and nuchal ligament, which must expand rapidly and recover completely. Molecular determinant of the late arterial morphogenesis, stabilizing arterial structure by regulating proliferation and organization of vascular smooth muscle. In Bos taurus (Bovine), this protein is Elastin (ELN).